Consider the following 290-residue polypeptide: Cilia- and flagella-associated protein 298-A (290 aa).

This sequence belongs to the CFAP298 family.

The protein localises to the cytoplasm. Its subcellular location is the cytoskeleton. It localises to the cilium basal body. Its function is as follows. Plays a role in motile cilium function, possibly by acting on outer dynein arm assembly. Seems to be important for initiation rather than maintenance of cilium motility. Required for correct positioning of the cilium at the apical cell surface, suggesting an additional role in the planar cell polarity (PCP) pathway. May suppress canonical Wnt signaling activity. The polypeptide is Cilia- and flagella-associated protein 298-A (cfap298-a) (Xenopus laevis (African clawed frog)).